The primary structure comprises 319 residues: Melanoma-associated antigen B2 (319 aa).

Basic residues predominate over residues 1–17; that stretch reads MPRGQKSKLRAREKRRK. Residues 1-112 form a disordered region; sequence MPRGQKSKLR…TKSPSEDPLT (112 aa). Composition is skewed to low complexity over residues 39-57, 67-79, and 94-105; these read PCCSSSVSGGAASSSPAAG, TTAAAAAAGVSST, and ASSSQASTSTKS. Phosphoserine occurs at positions 77 and 105. In terms of domain architecture, MAGE spans 111-310; sequence LTRKSGSLVQ…CAFPTHYEEA (200 aa).

Interacts with TRIM28. In terms of tissue distribution, expressed in testis and placenta, and in a significant fraction of tumors of various histologic types.

Functionally, may enhance ubiquitin ligase activity of RING-type zinc finger-containing E3 ubiquitin-protein ligases. Proposed to act through recruitment and/or stabilization of the Ubl-conjugating enzyme (E2) at the E3:substrate complex. In Homo sapiens (Human), this protein is Melanoma-associated antigen B2 (MAGEB2).